The chain runs to 159 residues: 2-C-methyl-D-erythritol 2,4-cyclodiphosphate synthase (159 aa).

Aspartate 8 and histidine 10 together coordinate a divalent metal cation. Residues 8 to 10 (DSH) and 34 to 35 (HS) contribute to the 4-CDP-2-C-methyl-D-erythritol 2-phosphate site. Histidine 42 is a binding site for a divalent metal cation. 4-CDP-2-C-methyl-D-erythritol 2-phosphate contacts are provided by residues 56–58 (DIG), 61–65 (FPDSD), phenylalanine 139, and arginine 142.

The protein belongs to the IspF family. Homotrimer. It depends on a divalent metal cation as a cofactor.

The enzyme catalyses 4-CDP-2-C-methyl-D-erythritol 2-phosphate = 2-C-methyl-D-erythritol 2,4-cyclic diphosphate + CMP. Its pathway is isoprenoid biosynthesis; isopentenyl diphosphate biosynthesis via DXP pathway; isopentenyl diphosphate from 1-deoxy-D-xylulose 5-phosphate: step 4/6. Involved in the biosynthesis of isopentenyl diphosphate (IPP) and dimethylallyl diphosphate (DMAPP), two major building blocks of isoprenoid compounds. Catalyzes the conversion of 4-diphosphocytidyl-2-C-methyl-D-erythritol 2-phosphate (CDP-ME2P) to 2-C-methyl-D-erythritol 2,4-cyclodiphosphate (ME-CPP) with a corresponding release of cytidine 5-monophosphate (CMP). The polypeptide is 2-C-methyl-D-erythritol 2,4-cyclodiphosphate synthase (Syntrophus aciditrophicus (strain SB)).